The sequence spans 383 residues: Opsin Rh3 (383 aa).

The Extracellular segment spans residues 1–57; that stretch reads MESGNVSSSLFGNVSTALRPEARLSAETRLLGWNVPPEELRHIPEHWLTYPEPPESM. N-linked (GlcNAc...) asparagine glycosylation is present at N13. Residues 58–82 traverse the membrane as a helical segment; sequence NYLLGTLYIFFTLMSMLGNGLVIWV. Residues 83–94 lie on the Cytoplasmic side of the membrane; that stretch reads FSAAKSLRTPSN. A helical transmembrane segment spans residues 95 to 119; sequence ILVINLAFCDFMMMVKTPIFIYNSF. At 120 to 133 the chain is on the extracellular side; the sequence is HQGYALGHLGCQIF. An intrachain disulfide couples C130 to C207. The chain crosses the membrane as a helical span at residues 134–153; it reads GIIGSYTGIAAGATNAFIAY. At 154-171 the chain is on the cytoplasmic side; the sequence is DRFNVITRPMEGKMTHGK. The chain crosses the membrane as a helical span at residues 172–196; it reads AIAMIIFIYMYATPWVVACYTETWG. Residues 197-220 are Extracellular-facing; it reads RFVPEGYLTSCTFDYLTDNFDTRL. A helical membrane pass occupies residues 221 to 248; that stretch reads FVACIFFFSFVCPTTMITYYYSQIVGHV. Topologically, residues 249-284 are cytoplasmic; sequence FSHEKALRDQAKKMNVESLRSNVDKNKETAEIRIAK. A helical transmembrane segment spans residues 285-308; that stretch reads AAITICFLFFCSWTPYGVMSLIGA. The Extracellular segment spans residues 309 to 316; sequence FGDKTLLT. Residues 317-341 traverse the membrane as a helical segment; it reads PGATMIPACACKMVACIDPFVYAIS. The residue at position 328 (K328) is an N6-(retinylidene)lysine. The Cytoplasmic portion of the chain corresponds to 342-383; the sequence is HPRYRMELQKRCPWLALNEKAPESSAVASTSTTQEPQQTTAA. The disordered stretch occupies residues 362 to 383; that stretch reads APESSAVASTSTTQEPQQTTAA. The span at 369–383 shows a compositional bias: low complexity; sequence ASTSTTQEPQQTTAA.

This sequence belongs to the G-protein coupled receptor 1 family. Opsin subfamily. Post-translationally, phosphorylated on some or all of the serine and threonine residues present in the C-terminal region.

Its subcellular location is the membrane. Visual pigments are the light-absorbing molecules that mediate vision. They consist of an apoprotein, opsin, covalently linked to cis-retinal. The polypeptide is Opsin Rh3 (Rh3) (Drosophila melanogaster (Fruit fly)).